A 109-amino-acid polypeptide reads, in one-letter code: Spermidine export protein MdtI (109 aa).

Transmembrane regions (helical) follow at residues F6–L26, W36–V56, A64–F84, and L88–L108.

This sequence belongs to the drug/metabolite transporter (DMT) superfamily. Small multidrug resistance (SMR) (TC 2.A.7.1) family. MdtI subfamily. Forms a complex with MdtJ.

The protein localises to the cell inner membrane. Its function is as follows. Catalyzes the excretion of spermidine. The chain is Spermidine export protein MdtI from Yersinia pseudotuberculosis serotype I (strain IP32953).